The sequence spans 426 residues: MSPAFRAMDVEPRAKGVLLEPFVHQVGGHSCVLRFNETTLCKPLVPREHQFYETLPAEMRKFTPQYKGVVSVRFEEDEDRNLCLIAYPLKGDHGIVDIVDNSDCEPKSKLLRWTTNKKHHVLETEKTPKDWVRQHRKEEKMKSHKLEEEFEWLKKSEVLYYTVEKKGNISSQLKHYNPWSMKCHQQQLQRMKENAKHRNQYKFILLENLTSRYEVPCVLDLKMGTRQHGDDASEEKAANQIRKCQQSTSAVIGVRVCGMQVYQAGSGQLMFMNKYHGRKLSVQGFKEALFQFFHNGRYLRRELLGPVLKKLTELKAVLERQESYRFYSSSLLVIYDGKERPEVVLDSDAEDLEDLSEESADESAGAYAYKPIGASSVDVRMIDFAHTTCRLYGEDTVVHEGQDAGYIFGLQSLIDIVTEISEESGE.

ATP-binding positions include 207–209 and aspartate 220; that span reads ENL. Residues lysine 222 and 236–243 each bind substrate; that span reads KAANQIRK. An ATP-binding site is contributed by aspartate 383. Position 386 (histidine 386) interacts with substrate.

This sequence belongs to the inositol phosphokinase (IPK) family.

The protein resides in the nucleus. It catalyses the reaction 1D-myo-inositol hexakisphosphate + ATP = 5-diphospho-1D-myo-inositol 1,2,3,4,6-pentakisphosphate + ADP. Its pathway is phospholipid metabolism; phosphatidylinositol metabolism. With respect to regulation, inhibited by flavonoids, including myricetin, quercetin, luteolin, isorhamnetin, rhamnetin, kaempferol, diosmetin and apigenin. Functionally, converts inositol hexakisphosphate (InsP6) to diphosphoinositol pentakisphosphate (InsP7/PP-InsP5). The chain is Inositol hexakisphosphate kinase 2 from Homo sapiens (Human).